The sequence spans 198 residues: Ribonuclease HII (198 aa).

The RNase H type-2 domain occupies 11 to 198 (ELIAGVDEVG…SPVRKLLENE (188 aa)). Residues D17, E18, and D109 each coordinate a divalent metal cation.

Belongs to the RNase HII family. It depends on Mn(2+) as a cofactor. The cofactor is Mg(2+).

The protein localises to the cytoplasm. It carries out the reaction Endonucleolytic cleavage to 5'-phosphomonoester.. Functionally, endonuclease that specifically degrades the RNA of RNA-DNA hybrids. The polypeptide is Ribonuclease HII (Mannheimia succiniciproducens (strain KCTC 0769BP / MBEL55E)).